The chain runs to 289 residues: HTH-type transcriptional regulator SoxR (289 aa).

The region spanning 1-58 is the HTH lysR-type domain; it reads MEIKDLQIFQKVVEYGSVSKAAKSLNYVQSYVTVRIQKLEEELQTELFHRSSRGMVLN. A DNA-binding region (H-T-H motif) is located at residues 18–37; it reads VSKAAKSLNYVQSYVTVRIQ.

It belongs to the LysR transcriptional regulatory family.

In terms of biological role, transcriptional repressor of soxA gene expression. The chain is HTH-type transcriptional regulator SoxR (soxR) from Arthrobacter sp. (strain TE1826).